Reading from the N-terminus, the 960-residue chain is Angiomotin-like protein 1 (960 aa).

Residues Ser196–Lys248 form a disordered region. Ser243, Ser271, and Ser297 each carry phosphoserine. Residues Arg261–Leu281 are a coiled coil. 3 disordered regions span residues Ala277–Phe317, Leu381–Val407, and Pro413–Leu432. Over residues Gln388–Ser401 the composition is skewed to low complexity. 2 coiled-coil regions span residues Val440 to Arg641 and Ala667 to Ser697. Ser722 is modified (phosphoserine). Residues Ser731–His761 adopt a coiled-coil conformation. Residues Gln775–Thr826 are disordered. Phosphoserine occurs at positions 795, 807, and 830. A compositionally biased stretch (polar residues) spans Gly804–Leu817. Residues Asn842–Asp952 form a disordered region. Over residues Ala845 to Ala870 the composition is skewed to low complexity. A compositionally biased stretch (polar residues) spans Pro898–Pro911. Ser904 is modified (phosphoserine). Position 906 is a phosphothreonine (Thr906). Ser910 bears the Phosphoserine mark. The PDZ-binding signature appears at Glu957–Ile960.

It belongs to the angiomotin family. Post-translationally, polyubiquitinated by NEDD4, leading to proteasomal degradation.

The protein resides in the cell junction. It localises to the tight junction. Its function is as follows. Inhibits the Wnt/beta-catenin signaling pathway, probably by recruiting CTNNB1 to recycling endosomes and hence preventing its translocation to the nucleus. This chain is Angiomotin-like protein 1 (AMOTL1), found in Bos taurus (Bovine).